The chain runs to 135 residues: MVLETISRIIKIQLPAYLKKLPLPETIGGFARLTVSEWLRLLPLLGILALLGYLTIRPFLPKKKKQKDSLINLKIQKENPKVVNEIDIEDLKRTNVCYCRCWRSKTFPVCDKSHIKHNELTGDNVGPLILKKKIL.

Topologically, residues 1–37 (MVLETISRIIKIQLPAYLKKLPLPETIGGFARLTVSE) are lumenal. Residues 38-60 (WLRLLPLLGILALLGYLTIRPFL) traverse the membrane as a helical segment. Over 61 to 135 (PKKKKQKDSL…GPLILKKKIL (75 aa)) the chain is Cytoplasmic. [2Fe-2S] cluster contacts are provided by cysteine 99, cysteine 101, cysteine 110, and histidine 114.

It belongs to the CISD protein family. CISD2 subfamily. As to quaternary structure, homodimer. It depends on [2Fe-2S] cluster as a cofactor.

It is found in the endoplasmic reticulum membrane. It localises to the mitochondrion outer membrane. Its function is as follows. Regulator of autophagy that contributes to antagonize becn1-mediated cellular autophagy at the endoplasmic reticulum. Participates in the interaction of bcl2 with becn1 and is required for bcl2-mediated depression of endoplasmic reticulum Ca(2+) stores during autophagy. The polypeptide is CDGSH iron-sulfur domain-containing protein 2A (cisd2a) (Salmo salar (Atlantic salmon)).